The primary structure comprises 306 residues: UDP-3-O-acyl-N-acetylglucosamine deacetylase (306 aa).

Residues His78, His237, and Asp241 each coordinate Zn(2+). His264 (proton donor) is an active-site residue.

This sequence belongs to the LpxC family. The cofactor is Zn(2+).

The enzyme catalyses a UDP-3-O-[(3R)-3-hydroxyacyl]-N-acetyl-alpha-D-glucosamine + H2O = a UDP-3-O-[(3R)-3-hydroxyacyl]-alpha-D-glucosamine + acetate. It functions in the pathway glycolipid biosynthesis; lipid IV(A) biosynthesis; lipid IV(A) from (3R)-3-hydroxytetradecanoyl-[acyl-carrier-protein] and UDP-N-acetyl-alpha-D-glucosamine: step 2/6. Its function is as follows. Catalyzes the hydrolysis of UDP-3-O-myristoyl-N-acetylglucosamine to form UDP-3-O-myristoylglucosamine and acetate, the committed step in lipid A biosynthesis. This is UDP-3-O-acyl-N-acetylglucosamine deacetylase from Aromatoleum aromaticum (strain DSM 19018 / LMG 30748 / EbN1) (Azoarcus sp. (strain EbN1)).